Reading from the N-terminus, the 195-residue chain is Cysteine/O-acetylserine efflux protein (195 aa).

Residues 1 to 7 are Periplasmic-facing; sequence MTPTLLS. The chain crosses the membrane as a helical span at residues 8-28; sequence AFWTYTLITAMTPGPNNILAL. Residues 29-46 lie on the Cytoplasmic side of the membrane; that stretch reads SSATSHGFRQSTRVLAGM. A helical membrane pass occupies residues 47–67; that stretch reads SLGFLIVMLLCAGISFSLAVI. Topologically, residues 68–69 are periplasmic; sequence DP. The helical transmembrane segment at 70 to 90 threads the bilayer; it reads AAVHLLSWAGAAYIVWLAWKI. Over 91-104 the chain is Cytoplasmic; the sequence is ATSPTKEDGLQTKP. Residues 105–125 traverse the membrane as a helical segment; that stretch reads ISFWASFALQFVNVKIILYGV. Over 126 to 141 the chain is Periplasmic; sequence TALSTFVLPQTQALSW. A helical membrane pass occupies residues 142–162; sequence VVGVSVLLAMIGTFGNVCWAL. The Cytoplasmic portion of the chain corresponds to 163–176; the sequence is AGHLFQRLFRQYGR. A helical transmembrane segment spans residues 177–194; it reads QLNIVLALLLVYCAVRIF. Position 195 (Tyr195) is a topological domain, periplasmic.

It belongs to the Rht family.

It is found in the cell inner membrane. It catalyses the reaction O-acetyl-L-serine(in) = O-acetyl-L-serine(out). It carries out the reaction L-cysteine(in) = L-cysteine(out). Its function is as follows. Exporter of O-acetylserine (OAS) and cysteine. The chain is Cysteine/O-acetylserine efflux protein (eamB) from Escherichia coli O1:K1 / APEC.